A 206-amino-acid chain; its full sequence is Pyridoxine/pyridoxamine 5'-phosphate oxidase (206 aa).

Residues 53–58 (RMVLLK), 68–69 (YT), Lys75, and Gln97 contribute to the FMN site. A substrate-binding site is contributed by Lys58. 3 residues coordinate substrate: Tyr115, Arg119, and Ser123. Residues 132–133 (QS) and Trp177 each bind FMN. Substrate is bound at residue 183 to 185 (RLH). Residue Arg187 coordinates FMN.

It belongs to the pyridoxamine 5'-phosphate oxidase family. In terms of assembly, homodimer. FMN serves as cofactor.

The catalysed reaction is pyridoxamine 5'-phosphate + O2 + H2O = pyridoxal 5'-phosphate + H2O2 + NH4(+). It catalyses the reaction pyridoxine 5'-phosphate + O2 = pyridoxal 5'-phosphate + H2O2. It participates in cofactor metabolism; pyridoxal 5'-phosphate salvage; pyridoxal 5'-phosphate from pyridoxamine 5'-phosphate: step 1/1. Its pathway is cofactor metabolism; pyridoxal 5'-phosphate salvage; pyridoxal 5'-phosphate from pyridoxine 5'-phosphate: step 1/1. Catalyzes the oxidation of either pyridoxine 5'-phosphate (PNP) or pyridoxamine 5'-phosphate (PMP) into pyridoxal 5'-phosphate (PLP). This Agrobacterium fabrum (strain C58 / ATCC 33970) (Agrobacterium tumefaciens (strain C58)) protein is Pyridoxine/pyridoxamine 5'-phosphate oxidase.